Consider the following 274-residue polypeptide: Cytochrome b-c1 complex subunit Rieske, mitochondrial (274 aa).

The Mitochondrial matrix segment spans residues 79–103; that stretch reads SHTDVKVPDFYDYRRLEVLDSTKSS. The chain crosses the membrane as a helical span at residues 104 to 140; sequence RESSEARKGFSYLVTAVTTVGVAYAAKNAVTQFISSM. At 141-274 the chain is on the mitochondrial intermembrane side; it reads SASADVLAMA…FTSDDMVVVG (134 aa). A Rieske domain is found at 187–272; that stretch reads EAAVELSQLR…YEFTSDDMVV (86 aa). Cys-217, His-219, Cys-236, His-239, and Ser-241 together coordinate [2Fe-2S] cluster. Cys-222 and Cys-238 form a disulfide bridge.

The protein belongs to the Rieske iron-sulfur protein family. As to quaternary structure, component of the ubiquinol-cytochrome c oxidoreductase (cytochrome b-c1 complex, complex III, CIII), a multisubunit enzyme composed of 11 subunits. The complex is composed of 3 respiratory subunits cytochrome b, cytochrome c1 and Rieske protein UQCRFS1, 2 core protein subunits UQCRC1/QCR1 and UQCRC2/QCR2, and 6 low-molecular weight protein subunits UQCRH/QCR6, UQCRB/QCR7, UQCRQ/QCR8, UQCR10/QCR9, UQCR11/QCR10 and subunit 9, the cleavage product of Rieske protein UQCRFS1. The complex exists as an obligatory dimer and forms supercomplexes (SCs) in the inner mitochondrial membrane with NADH-ubiquinone oxidoreductase (complex I, CI) and cytochrome c oxidase (complex IV, CIV), resulting in different assemblies (supercomplex SCI(1)III(2)IV(1) and megacomplex MCI(2)III(2)IV(2)). Incorporation of the Rieske protein UQCRFS1 is the penultimate step in complex III assembly. Interacts with TTC19, which is involved in the clearance of UQCRFS1 fragments. In terms of assembly, component of the ubiquinol-cytochrome c oxidoreductase (cytochrome b-c1 complex, complex III, CIII). Subunit 9 corresponds to the mitochondrial targeting sequence (MTS) of Rieske protein UQCRFS1. It is retained after processing and incorporated inside complex III, where it remains bound to the complex and localizes between the 2 core subunits UQCRC1/QCR1 and UQCRC2/QCR2. It depends on [2Fe-2S] cluster as a cofactor. In terms of processing, proteolytic processing is necessary for the correct insertion of UQCRFS1 in the complex III dimer. Several fragments are generated during UQCRFS1 insertion, most probably due to the endogenous matrix-processing peptidase (MPP) activity of the 2 core protein subunits UQCRC1/QCR1 and UQCRC2/QCR2, which are homologous to the 2 mitochondrial-processing peptidase (MPP) subunits beta-MPP and alpha-MPP respectively. The action of the protease is also necessary for the clearance of the UQCRFS1 fragments.

The protein resides in the mitochondrion inner membrane. It catalyses the reaction a quinol + 2 Fe(III)-[cytochrome c](out) = a quinone + 2 Fe(II)-[cytochrome c](out) + 2 H(+)(out). Its function is as follows. Component of the ubiquinol-cytochrome c oxidoreductase, a multisubunit transmembrane complex that is part of the mitochondrial electron transport chain which drives oxidative phosphorylation. The respiratory chain contains 3 multisubunit complexes succinate dehydrogenase (complex II, CII), ubiquinol-cytochrome c oxidoreductase (cytochrome b-c1 complex, complex III, CIII) and cytochrome c oxidase (complex IV, CIV), that cooperate to transfer electrons derived from NADH and succinate to molecular oxygen, creating an electrochemical gradient over the inner membrane that drives transmembrane transport and the ATP synthase. The cytochrome b-c1 complex catalyzes electron transfer from ubiquinol to cytochrome c, linking this redox reaction to translocation of protons across the mitochondrial inner membrane, with protons being carried across the membrane as hydrogens on the quinol. In the process called Q cycle, 2 protons are consumed from the matrix, 4 protons are released into the intermembrane space and 2 electrons are passed to cytochrome c. The Rieske protein is a catalytic core subunit containing a [2Fe-2S] iron-sulfur cluster. It cycles between 2 conformational states during catalysis to transfer electrons from the quinol bound in the Q(0) site in cytochrome b to cytochrome c1. Incorporation of UQCRFS1 is the penultimate step in complex III assembly. Functionally, component of the ubiquinol-cytochrome c oxidoreductase (cytochrome b-c1 complex, complex III, CIII). UQCRFS1 undergoes proteolytic processing once it is incorporated in the complex III dimer. One of the fragments, called subunit 9, corresponds to its mitochondrial targeting sequence (MTS). The proteolytic processing is necessary for the correct insertion of UQCRFS1 in the complex III dimer, but the persistence of UQCRFS1-derived fragments may prevent newly imported UQCRFS1 to be processed and assembled into complex III and is detrimental for the complex III structure and function. The chain is Cytochrome b-c1 complex subunit Rieske, mitochondrial (UQCRFS1) from Theropithecus gelada (Gelada baboon).